The following is a 370-amino-acid chain: 3-dehydroquinate synthase (370 aa).

Residues 108–112 (GVIGD), 132–133 (TT), lysine 145, and lysine 154 each bind NAD(+). Glutamate 187, histidine 249, and histidine 267 together coordinate Zn(2+).

Belongs to the sugar phosphate cyclases superfamily. Dehydroquinate synthase family. Co(2+) serves as cofactor. Requires Zn(2+) as cofactor. NAD(+) is required as a cofactor.

The protein resides in the cytoplasm. It catalyses the reaction 7-phospho-2-dehydro-3-deoxy-D-arabino-heptonate = 3-dehydroquinate + phosphate. Its pathway is metabolic intermediate biosynthesis; chorismate biosynthesis; chorismate from D-erythrose 4-phosphate and phosphoenolpyruvate: step 2/7. Its function is as follows. Catalyzes the conversion of 3-deoxy-D-arabino-heptulosonate 7-phosphate (DAHP) to dehydroquinate (DHQ). The chain is 3-dehydroquinate synthase from Cereibacter sphaeroides (strain ATCC 17025 / ATH 2.4.3) (Rhodobacter sphaeroides).